Reading from the N-terminus, the 109-residue chain is Probable glutaredoxin slr1562 (109 aa).

Residues 11 to 109 (LSGRQADGIK…PLLATPPNPA (99 aa)) enclose the Glutaredoxin domain. The cysteines at positions 31 and 34 are disulfide-linked.

The protein belongs to the glutaredoxin family.

In terms of biological role, has a glutathione-disulfide oxidoreductase activity in the presence of NADPH and glutathione reductase. Reduces low molecular weight disulfides and proteins. This chain is Probable glutaredoxin slr1562, found in Synechocystis sp. (strain ATCC 27184 / PCC 6803 / Kazusa).